The chain runs to 1136 residues: Protein stu-1 (1136 aa).

HEAT repeat units follow at residues T95 to V133 and Y167 to L205. Disordered regions lie at residues K524–P554, R567–I794, and T821–S884. Residues V595–A622 are compositionally biased toward low complexity. Pro residues predominate over residues P659–K668. Over residues T673–V683 the composition is skewed to polar residues. Residues S701–P716 are compositionally biased toward low complexity. 2 stretches are compositionally biased toward polar residues: residues L777–Q793 and A822–S833.

Belongs to the CLASP family. As to quaternary structure, interacts with microtubules.

The protein localises to the nucleus. It localises to the cytoplasm. It is found in the cytoskeleton. The protein resides in the spindle. Microtubule binding protein that promotes the stabilization of dynamic microtubules. Required for mitotic spindle formation. The polypeptide is Protein stu-1 (stu-1) (Neurospora crassa (strain ATCC 24698 / 74-OR23-1A / CBS 708.71 / DSM 1257 / FGSC 987)).